Consider the following 127-residue polypeptide: Aspartate 1-decarboxylase (127 aa).

The Schiff-base intermediate with substrate; via pyruvic acid role is filled by serine 25. Serine 25 carries the post-translational modification Pyruvic acid (Ser). Position 57 (threonine 57) interacts with substrate. Tyrosine 58 functions as the Proton donor in the catalytic mechanism. 73–75 lines the substrate pocket; it reads GSA.

This sequence belongs to the PanD family. As to quaternary structure, heterooctamer of four alpha and four beta subunits. It depends on pyruvate as a cofactor. Is synthesized initially as an inactive proenzyme, which is activated by self-cleavage at a specific serine bond to produce a beta-subunit with a hydroxyl group at its C-terminus and an alpha-subunit with a pyruvoyl group at its N-terminus.

The protein resides in the cytoplasm. The catalysed reaction is L-aspartate + H(+) = beta-alanine + CO2. It participates in cofactor biosynthesis; (R)-pantothenate biosynthesis; beta-alanine from L-aspartate: step 1/1. In terms of biological role, catalyzes the pyruvoyl-dependent decarboxylation of aspartate to produce beta-alanine. The polypeptide is Aspartate 1-decarboxylase (Dechloromonas aromatica (strain RCB)).